The primary structure comprises 34 residues: Phospholipase A2 (34 aa).

The active site involves His-18. Asp-19 contacts Ca(2+).

This sequence belongs to the phospholipase A2 family. Group I subfamily. D49 sub-subfamily. It depends on Ca(2+) as a cofactor. Contains 7 disulfide bonds. As to expression, expressed by the venom gland.

It localises to the secreted. It catalyses the reaction a 1,2-diacyl-sn-glycero-3-phosphocholine + H2O = a 1-acyl-sn-glycero-3-phosphocholine + a fatty acid + H(+). Snake venom phospholipase A2 (PLA2) that strongly inhibits platelet aggregation and has a strong anticoagulant activity. PLA2 catalyzes the calcium-dependent hydrolysis of the 2-acyl groups in 3-sn-phosphoglycerides. The sequence is that of Phospholipase A2 from Pseudechis papuanus (Papuan black snake).